The chain runs to 341 residues: Ketol-acid reductoisomerase (NADP(+)) (341 aa).

A KARI N-terminal Rossmann domain is found at M1 to T182. NADP(+) is bound by residues Y25 to Q28, K48, S51, S53, and D83 to Q86. The active site involves H108. G134 lines the NADP(+) pocket. The KARI C-terminal knotted domain occupies T183–Q328. Residues D191, E195, E227, and E231 each contribute to the Mg(2+) site. Residue S252 participates in substrate binding.

Belongs to the ketol-acid reductoisomerase family. The cofactor is Mg(2+).

The enzyme catalyses (2R)-2,3-dihydroxy-3-methylbutanoate + NADP(+) = (2S)-2-acetolactate + NADPH + H(+). It carries out the reaction (2R,3R)-2,3-dihydroxy-3-methylpentanoate + NADP(+) = (S)-2-ethyl-2-hydroxy-3-oxobutanoate + NADPH + H(+). It participates in amino-acid biosynthesis; L-isoleucine biosynthesis; L-isoleucine from 2-oxobutanoate: step 2/4. It functions in the pathway amino-acid biosynthesis; L-valine biosynthesis; L-valine from pyruvate: step 2/4. Functionally, involved in the biosynthesis of branched-chain amino acids (BCAA). Catalyzes an alkyl-migration followed by a ketol-acid reduction of (S)-2-acetolactate (S2AL) to yield (R)-2,3-dihydroxy-isovalerate. In the isomerase reaction, S2AL is rearranged via a Mg-dependent methyl migration to produce 3-hydroxy-3-methyl-2-ketobutyrate (HMKB). In the reductase reaction, this 2-ketoacid undergoes a metal-dependent reduction by NADPH to yield (R)-2,3-dihydroxy-isovalerate. The protein is Ketol-acid reductoisomerase (NADP(+)) of Arthrobacter sp. (strain FB24).